The sequence spans 725 residues: MANNNLNRPLNTNVADSSNSSSTPGTAPPPSSSDPQVLGHQAPSSSASSLTEDCSSSFARDLNSYNNGQSGATGAVSWEAPHEPSEANAVSQIHPRNGEHSLQQKPKPQKVSGSSSLATSERYKTELCRPFEESGICKYGHKCQFAHGYRELRTLSRHPKYKTEPCRTFHSVGFCPYGTRCHFIHNQPEQQPVLSESTLEEPSSFNGSNVLHLGVNGEQQPGLQSDSPSGFLSVNSQALQAPLQLNQQALSSGGVMPSSHPAAANLRMMCCRTSSSTTAHDADKDPDKDADKDPSNNSANDALAFPQEPGDFSPVAFQNPNTATTTPTAFYNNQQQMGLAASAQFQMPLARPLPSATIFGQASVGPALTPGAAMAPGAALAPAAALTPAAALAPGAAMALGAAMATGAAMATGAALTPGAALALGAAMAAGAALAPGAAMAPGAAMATGAALAFGAAMATGTTLTPGAAMALGAAMATGAALAPGAAVAPRAALAPRAAFAPGAAALAPRAALPPGAALTPGAALAPGAALAPRAALPPGATLRPGAALIPRAALAPGAALAPGAALTPGAALAPGATLAPRAALAPGAALAPRITITSRAAITPGVAIAPGVATASTGILAPGAATATVGNTSSTTITAATAAEGAAPHFTFQLPDVESESESESLEFDVVTSTLDSLLVSDDEDEDDFLRRSSSSSSLNESEFDNTNSSRRLPIFSRFSDSEK.

Low complexity predominate over residues 1–25 (MANNNLNRPLNTNVADSSNSSSTPG). Positions 1–119 (MANNNLNRPL…KVSGSSSLAT (119 aa)) are disordered. Composition is skewed to polar residues over residues 42–72 (APSS…QSGA) and 100–119 (HSLQ…SLAT). 2 consecutive C3H1-type zinc fingers follow at residues 122–150 (RYKT…HGYR) and 160–188 (KYKT…HNQP). Residues 193–711 (VLSESTLEEP…ESEFDNTNSS (519 aa)) form a necessary for cytoplasmic localization region. Residues 276 to 310 (STTAHDADKDPDKDADKDPSNNSANDALAFPQEPG) form a disordered region. Over residues 280–294 (HDADKDPDKDADKDP) the composition is skewed to basic and acidic residues. Helical transmembrane passes span 380-400 (LAPA…AMAL), 420-440 (AALA…GAAM), 441-461 (APGA…MATG), and 468-488 (AAMA…GAAV). Residues 686–709 (DEDDFLRRSSSSSSLNESEFDNTN) are disordered. A compositionally biased stretch (low complexity) spans 693 to 702 (RSSSSSSLNE).

As to expression, expressed in placenta and extraembryonic tissues (at protein level). Not detected in embryos and fetus.

It localises to the cytoplasm. The protein resides in the membrane. In terms of biological role, placenta-specific zinc-finger RNA-binding protein that destabilizes cytoplasmic AU-rich element (ARE)-containing mRNA transcripts by promoting their poly(A) tail removal or deadenylation, and hence provide a mechanism for attenuating protein synthesis. Binds to the 3'-UTR ARE of placental target mRNAs, such as TNF, HBEGF and LIPG. Involved in placental expression of many genes important for normal placental physiology. This is mRNA decay activator protein ZFP36L3 from Mus musculus (Mouse).